Here is a 185-residue protein sequence, read N- to C-terminus: Photosystem I assembly protein Ycf4 (185 aa).

A run of 2 helical transmembrane segments spans residues 21–43 (NFFW…ISSY) and 63–85 (GVVM…CTIL).

The protein belongs to the Ycf4 family.

Its subcellular location is the plastid. The protein resides in the chloroplast thylakoid membrane. Seems to be required for the assembly of the photosystem I complex. The sequence is that of Photosystem I assembly protein Ycf4 from Aegilops crassa (Persian goatgrass).